Consider the following 405-residue polypeptide: Molybdopterin molybdenumtransferase 2 (405 aa).

The protein belongs to the MoeA family. Mg(2+) serves as cofactor.

The enzyme catalyses adenylyl-molybdopterin + molybdate = Mo-molybdopterin + AMP + H(+). It participates in cofactor biosynthesis; molybdopterin biosynthesis. In terms of biological role, catalyzes the insertion of molybdate into adenylated molybdopterin with the concomitant release of AMP. The chain is Molybdopterin molybdenumtransferase 2 (moaE2) from Mycobacterium tuberculosis (strain CDC 1551 / Oshkosh).